Reading from the N-terminus, the 830-residue chain is MMLLGSPSSGGYGGKFAGASPAGGTTTMAPSAKQPSSRAPPPGITGGRNDLRILSPAAAAAAVGGLEMKKPEAEGIAESLQATHRKELEASIRKQLQGVELSPSPYDTAWVAMVPLRGSSHNPSFPQCVDWILENQWDDGSWSIDGSISTANKDVLSSTLACVLALNKWNVGREHIRRGLSFIGRNFSIAMDDQAVAPIGFGITFPAMLTLANGSGLEVPVRQNDIDSLNHLREMKIQREAGNHSRGRKAYMAYLAEGFGNLLEWDEIMMFQRKNGSLFNCPSSTAGALANYHDDKALQYLQSLVNKFDGVVPTLYPLNIYCQLSMVDALENMGISQYFASEIKSILDMTYSSWLGRDEEIMLDVTTCAMAFRLLRMNGYDVSSDELSHVAGASGFRDSLQGYLNDRKSVLEVYKTSKHSISENDLILDSIGSWSGSLLKEMLCSNGIQGTPGREEIEFALKYPFYSTLERLVHRKNIVLFDAKGSQMLKTECMPVHDSQDFLALAVDDFCISQSNYQNELNYLESWVKDNRLDQLHFARQKITYCYLSGAATTFRPEMGYARTSWARTAWLTAVIDDLFDVGGLEQEQENLLALMEKWEEPGEDEYYSEDVKIVFQALYNTVNEIGAKASALQGHDVTKYLVDVWLHVVRCMKVEAEWQRSQHLPTFEEYMESGMVSLGQGATVMSALFLIGEKLPEGVVELEEYDEMFRLMGTCGRLLNDIRGIEREESDGKMTNGVSLLVHASGGSMSVDEAKTEVMKRIDASRRKLLSLVVGEQEGPIPRPCKQLFWKMCKILHLFYYQTDGFSSPKEMVSAVDAVIKEPLQLRSL.

A disordered region spans residues 1–50 (MMLLGSPSSGGYGGKFAGASPAGGTTTMAPSAKQPSSRAPPPGITGGRND). Residues 23–37 (GGTTTMAPSAKQPSS) show a composition bias toward polar residues. Residues Asp-577, Asp-581, Asn-721, and Glu-729 each coordinate Mg(2+). Residues 577–581 (DDLFD) carry the DDXXD motif motif.

This sequence belongs to the terpene synthase family. Requires Mg(2+) as cofactor. In terms of tissue distribution, expressed in roots and stems.

It catalyses the reaction ent-copalyl diphosphate = ent-cassa-12,15-diene + diphosphate. In terms of biological role, involved in phytocassane phytoalexins biosynthesis. Catalyzes the conversion of ent-copalyl diphosphate to the phytoalexin precursor ent-cassa-12,15-diene. This Oryza sativa subsp. indica (Rice) protein is Ent-cassa-12,15-diene synthase (KSL7).